We begin with the raw amino-acid sequence, 239 residues long: Calcium-activated potassium channel subunit beta-3 (239 aa).

Residues M1–T51 are Cytoplasmic-facing. Residues G15 to H38 are disordered. Residues L52–V72 traverse the membrane as a helical segment. Over L73 to K197 the chain is Extracellular. N86, N123, and N174 each carry an N-linked (GlcNAc...) asparagine glycan. The helical transmembrane segment at V198 to G218 threads the bilayer. The Cytoplasmic segment spans residues L219–A239.

The protein belongs to the KCNMB (TC 8.A.14.1) family. KCNMB3 subfamily. As to quaternary structure, interacts with KCNMA1 tetramer. There are probably 4 molecules of KCMNB3 per KCNMA1 tetramer. N-glycosylated. Post-translationally, the extracellular domain contains disulfide bond essential for the gating mechanism.

The protein resides in the membrane. In terms of biological role, regulatory subunit of the calcium activated potassium KCNMA1 (maxiK) channel. Modulates the calcium sensitivity and gating kinetics of KCNMA1, thereby contributing to KCNMA1 channel diversity. Alters the functional properties of the current expressed by the KCNMA1 channel. May partially inactivate the current of KCNBMA. Two or more subunits of KCNMB3 are required to block the KCNMA1 tetramer. The chain is Calcium-activated potassium channel subunit beta-3 from Rattus norvegicus (Rat).